A 592-amino-acid polypeptide reads, in one-letter code: A-type ATP synthase subunit A (592 aa).

Residue Gly233–Thr240 coordinates ATP.

This sequence belongs to the ATPase alpha/beta chains family. Has multiple subunits with at least A(3), B(3), C, D, E, F, H, I and proteolipid K(x).

It is found in the cell membrane. It catalyses the reaction ATP + H2O + 4 H(+)(in) = ADP + phosphate + 5 H(+)(out). Functionally, component of the A-type ATP synthase that produces ATP from ADP in the presence of a proton gradient across the membrane. The A chain is the catalytic subunit. In Saccharolobus islandicus (strain Y.G.57.14 / Yellowstone #1) (Sulfolobus islandicus), this protein is A-type ATP synthase subunit A.